Here is a 62-residue protein sequence, read N- to C-terminus: uncharacterized protein (62 aa).

The segment covering 1–18 (MTTNRVDPLEQTSPNTPT) has biased composition (polar residues). Residues 1-24 (MTTNRVDPLEQTSPNTPTSKREKA) are disordered.

This is an uncharacterized protein from Rickettsia conorii (strain ATCC VR-613 / Malish 7).